A 224-amino-acid polypeptide reads, in one-letter code: Ribonuclease T (224 aa).

In terms of domain architecture, Exonuclease spans 32 to 206 (VVVDVETGGF…YDTEKTAELF (175 aa)). The Mg(2+) site is built by aspartate 35, glutamate 37, histidine 193, and aspartate 198. The Proton donor/acceptor role is filled by histidine 193.

It belongs to the RNase T family. Homodimer. The cofactor is Mg(2+).

Functionally, trims short 3' overhangs of a variety of RNA species, leaving a one or two nucleotide 3' overhang. Responsible for the end-turnover of tRNA: specifically removes the terminal AMP residue from uncharged tRNA (tRNA-C-C-A). Also appears to be involved in tRNA biosynthesis. This chain is Ribonuclease T, found in Pseudomonas fluorescens (strain Pf0-1).